Reading from the N-terminus, the 175-residue chain is ATP synthase subunit b (175 aa).

A helical membrane pass occupies residues 23 to 43 (TGITFLVLLFVLGKFAWGPIV).

The protein belongs to the ATPase B chain family. In terms of assembly, F-type ATPases have 2 components, F(1) - the catalytic core - and F(0) - the membrane proton channel. F(1) has five subunits: alpha(3), beta(3), gamma(1), delta(1), epsilon(1). F(0) has three main subunits: a(1), b(2) and c(10-14). The alpha and beta chains form an alternating ring which encloses part of the gamma chain. F(1) is attached to F(0) by a central stalk formed by the gamma and epsilon chains, while a peripheral stalk is formed by the delta and b chains.

Its subcellular location is the cell inner membrane. Its function is as follows. F(1)F(0) ATP synthase produces ATP from ADP in the presence of a proton or sodium gradient. F-type ATPases consist of two structural domains, F(1) containing the extramembraneous catalytic core and F(0) containing the membrane proton channel, linked together by a central stalk and a peripheral stalk. During catalysis, ATP synthesis in the catalytic domain of F(1) is coupled via a rotary mechanism of the central stalk subunits to proton translocation. Component of the F(0) channel, it forms part of the peripheral stalk, linking F(1) to F(0). In Anaeromyxobacter sp. (strain Fw109-5), this protein is ATP synthase subunit b.